A 165-amino-acid polypeptide reads, in one-letter code: Peptidyl-prolyl cis-trans isomerase-like 1 (165 aa).

One can recognise a PPIase cyclophilin-type domain in the interval 3 to 157; it reads EREEVILDTS…IVQKILYALN (155 aa).

It belongs to the cyclophilin-type PPIase family. PPIL1 subfamily.

The catalysed reaction is [protein]-peptidylproline (omega=180) = [protein]-peptidylproline (omega=0). In terms of biological role, PPIases accelerate the folding of proteins. It catalyzes the cis-trans isomerization of proline imidic peptide bonds in oligopeptides. The polypeptide is Peptidyl-prolyl cis-trans isomerase-like 1 (cyp3) (Rhizopus delemar (strain RA 99-880 / ATCC MYA-4621 / FGSC 9543 / NRRL 43880) (Mucormycosis agent)).